The following is a 138-amino-acid chain: Acidic phospholipase A2 Cvv-E6e (138 aa).

The first 16 residues, 1-16, serve as a signal peptide directing secretion; the sequence is MRTLWILAVLLLGVEG. Disulfide bonds link Cys42–Cys131, Cys44–Cys60, Cys59–Cys111, Cys65–Cys138, Cys66–Cys104, Cys73–Cys97, and Cys91–Cys102. Residues Tyr43, Gly45, and Gly47 each coordinate Ca(2+). His63 is an active-site residue. Asp64 is a Ca(2+) binding site. Asp105 is a catalytic residue.

Requires Ca(2+) as cofactor. Expressed by the venom gland.

It is found in the secreted. It carries out the reaction a 1,2-diacyl-sn-glycero-3-phosphocholine + H2O = a 1-acyl-sn-glycero-3-phosphocholine + a fatty acid + H(+). Functionally, snake venom phospholipase A2 (PLA2) that significantly inhibits ADP-induced platelet aggregation in platelet-rich plasma of human, rabbit and guinea pig. PLA2 catalyzes the calcium-dependent hydrolysis of the 2-acyl groups in 3-sn-phosphoglycerides. The sequence is that of Acidic phospholipase A2 Cvv-E6e from Crotalus viridis viridis (Prairie rattlesnake).